A 371-amino-acid polypeptide reads, in one-letter code: MRDKIKNARRLIVKVGSALVTNNGAGLDPAALDDWARQIAALRARGREIVLVSSGAIAAGMQRLGWVKRPHEMHRLQAAAAVGQMGLVEAYEKAFSRHGLQTAQILLTHEDLADRTRYLNARSTLVTLLELGVVPIINENDTVVTDEIKFGDNDTLGALVANLVEADTLIILTDQRGLYTADPRRDPGATLISEGRAEDRQYEAMAGGAGSGISKGGMITKIRAAQRAARSGAHTCIASGRETDPLLRLADGEAVGTLLYADSTPLQARKQWLADHLQLAGSLIVDAGAARALDDGRSLLPVGVVEVQGEFKRGAAVACRDEHGTELARGLVNYSSAECRRILRRPTSDIEQLLGYIDEPELIHRDNLVIR.

Residue Lys14 participates in ATP binding. Positions 54, 141, and 153 each coordinate substrate. ATP is bound at residue 173 to 174 (TD). The 78-residue stretch at 280–357 (AGSLIVDAGA…SDIEQLLGYI (78 aa)) folds into the PUA domain.

It belongs to the glutamate 5-kinase family.

Its subcellular location is the cytoplasm. It catalyses the reaction L-glutamate + ATP = L-glutamyl 5-phosphate + ADP. It participates in amino-acid biosynthesis; L-proline biosynthesis; L-glutamate 5-semialdehyde from L-glutamate: step 1/2. Its function is as follows. Catalyzes the transfer of a phosphate group to glutamate to form L-glutamate 5-phosphate. The sequence is that of Glutamate 5-kinase from Azoarcus sp. (strain BH72).